Here is a 169-residue protein sequence, read N- to C-terminus: Nucleoside diphosphate kinase 3 (169 aa).

The ADP site is built by K29, R105, T111, R122, V129, and N132. The active-site Pros-phosphohistidine intermediate is H135.

This sequence belongs to the NDK family. As to quaternary structure, homohexamer. Interacts (via its N-terminal region) with KAT5; this interaction enables recruitment of NME3 at DNA damage sites where it plays a role in the repair of DNA. Found in association with several ciliary nephronophthisis proteins, including NEK8, CEP164, ANKS6. Mg(2+) serves as cofactor.

It is found in the mitochondrion outer membrane. It localises to the cytoplasm. Its subcellular location is the cytoskeleton. The protein localises to the cilium basal body. The enzyme catalyses a 2'-deoxyribonucleoside 5'-diphosphate + ATP = a 2'-deoxyribonucleoside 5'-triphosphate + ADP. It carries out the reaction a ribonucleoside 5'-diphosphate + ATP = a ribonucleoside 5'-triphosphate + ADP. Its function is as follows. Catalyzes the phosphorylation of ribonucleosides and deoxyribonucleoside diphosphates, other than ATP, into the corresponding triphosphates with ATP as the major phosphate donor. The ATP gamma phosphate is transferred to the nucleoside diphosphate beta phosphate via a ping-pong mechanism, using a phosphorylated active-site intermediate. Through the catalyzed exchange of gamma-phosphate between di- and triphosphonucleosides participates in regulation of intracellular nucleotide homeostasis. Inhibits granulocyte differentiation. May be required for ciliary function during renal development. In terms of biological role, independently of its kinase activity, facilitates mitochondrial tethering prior to membrane fusion through its direct membrane-binding and hexamerization. Implicated in repair of both single- and double-stranded breaks in DNA through its association with the ribonucleotide reductase complex (RNR complex) via its interaction with the histone acetyltransferase KAT5, this interaction enables recruitment of NME3 at DNA damage sites where it plays a role in the repair of DNA, independently of its kinase activity. The sequence is that of Nucleoside diphosphate kinase 3 from Homo sapiens (Human).